The following is a 282-amino-acid chain: Protein-export membrane protein SecF (282 aa).

Transmembrane regions (helical) follow at residues 9 to 29 (IAIPIALLILSILLIGFKGIP), 120 to 140 (EGFKAVGFAFMFMAIVVYLYF), 149 to 169 (IILSALSDIIMALGAMSLLGI), 174 to 194 (ATIAALLMVIGYSVDSDILLT), 214 to 234 (KTGLTMTLTTITAMLILLIVV), and 236 to 256 (LFIPVADILANIATVLILALI).

Belongs to the SecD/SecF family. SecF subfamily. Part of the protein translocation apparatus. Forms a complex with SecD.

Its subcellular location is the cell membrane. Its function is as follows. Involved in protein export. In Methanocaldococcus jannaschii (strain ATCC 43067 / DSM 2661 / JAL-1 / JCM 10045 / NBRC 100440) (Methanococcus jannaschii), this protein is Protein-export membrane protein SecF.